The primary structure comprises 291 residues: tRNA-uridine aminocarboxypropyltransferase 1 (291 aa).

The segment at 158-181 is disordered; it reads KNSAYEPSSKRPKFSPENDKNTYE. Over residues 171–181 the composition is skewed to basic and acidic residues; that stretch reads FSPENDKNTYE. The DXTW motif lies at 199–202; it reads DSTW.

This sequence belongs to the TDD superfamily. DTWD1 family.

The protein resides in the nucleus. The enzyme catalyses a uridine in tRNA + S-adenosyl-L-methionine = a 3-[(3S)-3-amino-3-carboxypropyl]uridine in tRNA + S-methyl-5'-thioadenosine + H(+). Catalyzes the formation of 3-(3-amino-3-carboxypropyl)uridine (acp3U) at position 20 in the D-loop of several cytoplasmic tRNAs (acp3U(20)). The sequence is that of tRNA-uridine aminocarboxypropyltransferase 1 from Xenopus laevis (African clawed frog).